Reading from the N-terminus, the 37-residue chain is Large ribosomal subunit protein bL36c (37 aa).

This sequence belongs to the bacterial ribosomal protein bL36 family.

Its subcellular location is the plastid. The protein resides in the chloroplast. This chain is Large ribosomal subunit protein bL36c, found in Gracilaria tenuistipitata var. liui (Red alga).